The sequence spans 189 residues: Ribulose bisphosphate carboxylase small subunit, chloroplastic (189 aa).

The transit peptide at 1–66 (MASSIMALSS…KTTSNGSRVR (66 aa)) directs the protein to the chloroplast.

The protein belongs to the RuBisCO small chain family. In terms of assembly, heterohexadecamer of 8 large and 8 small subunits.

The protein localises to the plastid. The protein resides in the chloroplast. In terms of biological role, ruBisCO catalyzes two reactions: the carboxylation of D-ribulose 1,5-bisphosphate, the primary event in carbon dioxide fixation, as well as the oxidative fragmentation of the pentose substrate. Both reactions occur simultaneously and in competition at the same active site. Although the small subunit is not catalytic it is essential for maximal activity. The chain is Ribulose bisphosphate carboxylase small subunit, chloroplastic from Larix laricina (Tamarack).